The chain runs to 191 residues: Outer membrane lipoprotein DolP (191 aa).

Residues Met-1 to Gly-18 form the signal peptide. The N-palmitoyl cysteine moiety is linked to residue Cys-19. Cys-19 is lipidated: S-diacylglycerol cysteine. 2 BON domains span residues Asp-46–Gln-115 and Asn-124–Lys-191.

This sequence belongs to the lipoprotein DolP family.

The protein localises to the cell outer membrane. Functionally, plays an important role in maintaining outer membrane integrity. Contributes to virulence. The chain is Outer membrane lipoprotein DolP from Salmonella typhimurium (strain LT2 / SGSC1412 / ATCC 700720).